The sequence spans 258 residues: Type III pantothenate kinase (258 aa).

Position 12-19 (12-19 (DIGNTSIA)) interacts with ATP. Residues Tyr-94 and 109–112 (GSDV) contribute to the substrate site. Asp-111 serves as the catalytic Proton acceptor. A K(+)-binding site is contributed by Asp-132. Thr-135 is a binding site for ATP. Residue Thr-187 coordinates substrate.

The protein belongs to the type III pantothenate kinase family. As to quaternary structure, homodimer. NH4(+) is required as a cofactor. It depends on K(+) as a cofactor.

The protein resides in the cytoplasm. It catalyses the reaction (R)-pantothenate + ATP = (R)-4'-phosphopantothenate + ADP + H(+). Its pathway is cofactor biosynthesis; coenzyme A biosynthesis; CoA from (R)-pantothenate: step 1/5. In terms of biological role, catalyzes the phosphorylation of pantothenate (Pan), the first step in CoA biosynthesis. The chain is Type III pantothenate kinase from Borreliella afzelii (strain PKo) (Borrelia afzelii).